A 484-amino-acid chain; its full sequence is Aldehyde dehydrogenase family 3 member F1 (484 aa).

An NAD(+)-binding site is contributed by 192–197 (GSPKIG). Glutamate 214 acts as the Proton acceptor in catalysis. Cysteine 252 acts as the Nucleophile in catalysis.

It belongs to the aldehyde dehydrogenase family. As to quaternary structure, homotetramer. In terms of tissue distribution, constituively expressed at low levels.

It catalyses the reaction an aldehyde + NAD(+) + H2O = a carboxylate + NADH + 2 H(+). The chain is Aldehyde dehydrogenase family 3 member F1 (ALDH3F1) from Arabidopsis thaliana (Mouse-ear cress).